Reading from the N-terminus, the 131-residue chain is Small ribosomal subunit protein uS8 (131 aa).

It belongs to the universal ribosomal protein uS8 family. In terms of assembly, part of the 30S ribosomal subunit. Contacts proteins S5 and S12.

Its function is as follows. One of the primary rRNA binding proteins, it binds directly to 16S rRNA central domain where it helps coordinate assembly of the platform of the 30S subunit. The protein is Small ribosomal subunit protein uS8 of Chlorobium chlorochromatii (strain CaD3).